The sequence spans 409 residues: Arginine deiminase (409 aa).

Residue cysteine 399 is the Amidino-cysteine intermediate of the active site.

The protein belongs to the arginine deiminase family.

It is found in the cytoplasm. The enzyme catalyses L-arginine + H2O = L-citrulline + NH4(+). The protein operates within amino-acid degradation; L-arginine degradation via ADI pathway; carbamoyl phosphate from L-arginine: step 1/2. The protein is Arginine deiminase of Streptococcus gordonii (strain Challis / ATCC 35105 / BCRC 15272 / CH1 / DL1 / V288).